The following is a 367-amino-acid chain: Glutamate 5-kinase (367 aa).

K10 contacts ATP. Residues S50, D137, and N149 each coordinate substrate. ATP-binding positions include 169 to 170 (TD) and 211 to 217 (TGGMGTK). A PUA domain is found at 275–353 (AGEITVDDGA…QEISEILGYE (79 aa)).

This sequence belongs to the glutamate 5-kinase family.

The protein localises to the cytoplasm. The catalysed reaction is L-glutamate + ATP = L-glutamyl 5-phosphate + ADP. It functions in the pathway amino-acid biosynthesis; L-proline biosynthesis; L-glutamate 5-semialdehyde from L-glutamate: step 1/2. Its function is as follows. Catalyzes the transfer of a phosphate group to glutamate to form L-glutamate 5-phosphate. In Serratia proteamaculans (strain 568), this protein is Glutamate 5-kinase.